We begin with the raw amino-acid sequence, 252 residues long: Trans-aconitate 2-methyltransferase (252 aa).

Belongs to the methyltransferase superfamily. Tam family.

It is found in the cytoplasm. The enzyme catalyses trans-aconitate + S-adenosyl-L-methionine = (E)-3-(methoxycarbonyl)pent-2-enedioate + S-adenosyl-L-homocysteine. In terms of biological role, catalyzes the S-adenosylmethionine monomethyl esterification of trans-aconitate. In Escherichia coli O17:K52:H18 (strain UMN026 / ExPEC), this protein is Trans-aconitate 2-methyltransferase.